An 877-amino-acid polypeptide reads, in one-letter code: Probable sulfate permease C3H7.02 (877 aa).

Helical transmembrane passes span 133 to 153 (WLVY…PQGM), 161 to 181 (LPAQ…CIFA), 186 to 206 (VSIG…ANVQ), 221 to 241 (LALL…GFII), 243 to 263 (FIPV…IMAG), 292 to 312 (LPHT…LYLV), 329 to 349 (VFFL…TAIS), 384 to 404 (LCAD…LEHI), 424 to 444 (LIAM…PATG), 461 to 481 (LGGI…TGAF), 484 to 504 (IPNA…IIPW), 518 to 538 (ALIF…NGIY), and 543 to 563 (LSAA…LGIL). In terms of domain architecture, STAS spans 594–747 (NLTVRDPPAG…SRSIEVGSAA (154 aa)). 2 disordered regions span residues 643–663 (KASD…APEV) and 793–821 (ADSD…TFSH). Positions 801-821 (SDDKDKKVEGHRPSQDPTFSH) are enriched in basic and acidic residues.

The protein belongs to the SLC26A/SulP transporter (TC 2.A.53) family.

The protein resides in the membrane. High affinity uptake of sulfate into the cell. The polypeptide is Probable sulfate permease C3H7.02 (Schizosaccharomyces pombe (strain 972 / ATCC 24843) (Fission yeast)).